Consider the following 990-residue polypeptide: Storkhead-box protein 1 (990 aa).

The segment covering T396 to G408 has biased composition (basic and acidic residues). Disordered regions lie at residues T396–L471, V562–V586, G712–C736, and L809–P832. A compositionally biased stretch (basic residues) spans K416–R431. Positions L809–R830 are enriched in polar residues.

In terms of tissue distribution, detected in sensory epithelial cells of the inner ear but not in adjacent surrounding tissue (at protein level).

Its subcellular location is the nucleus. The protein localises to the cytoplasm. It localises to the cytoskeleton. The protein resides in the microtubule organizing center. It is found in the centrosome. Functionally, involved in regulating the levels of reactive oxidative species and reactive nitrogen species and in mitochondrial homeostasis in the placenta. Required for regulation of inner ear epithelial cell proliferation via the AKT signaling pathway. Involved in cell cycle regulation by binding to the CCNB1 promoter, up-regulating its expression and promoting mitotic entry. Induces phosphorylation of MAPT/tau. The protein is Storkhead-box protein 1 of Mus musculus (Mouse).